The following is a 308-amino-acid chain: Ornithine carbamoyltransferase (308 aa).

Residues 51 to 54 (STRT), glutamine 78, arginine 102, and 129 to 132 (HPTQ) contribute to the carbamoyl phosphate site. L-ornithine contacts are provided by residues asparagine 160, aspartate 224, and 228 to 229 (SM). Carbamoyl phosphate contacts are provided by residues 264 to 265 (CL) and arginine 292.

It belongs to the aspartate/ornithine carbamoyltransferase superfamily. OTCase family.

The protein resides in the cytoplasm. The catalysed reaction is carbamoyl phosphate + L-ornithine = L-citrulline + phosphate + H(+). It participates in amino-acid biosynthesis; L-arginine biosynthesis; L-arginine from L-ornithine and carbamoyl phosphate: step 1/3. In terms of biological role, reversibly catalyzes the transfer of the carbamoyl group from carbamoyl phosphate (CP) to the N(epsilon) atom of ornithine (ORN) to produce L-citrulline. The polypeptide is Ornithine carbamoyltransferase (Caldicellulosiruptor saccharolyticus (strain ATCC 43494 / DSM 8903 / Tp8T 6331)).